The chain runs to 421 residues: Hydrolyase poxO (421 aa).

Serine 239 functions as the Nucleophile in the catalytic mechanism.

This sequence belongs to the AB hydrolase superfamily. FUS2 hydrolase family. Homodimer.

It participates in secondary metabolite biosynthesis. Hydrolyase; part of the gene cluster that mediates the biosynthesis of oxaleimides, cytotoxic compounds containing an unusual disubstituted succinimide moiety. The first step of the pathway is provided by the HR-PKS poxF that serves in a new mode of collaborative biosynthesis with the PKS-NRPS poxE, by providing the olefin containing amino acid substrate via the synthesis of an ACP-bound dec-4-enoate. The cytochrome P450 monooxygenase poxM-catalyzed oxidation at the alpha-position creates the enzyme-bound 2-hydroxydec-4-enoyl-ACP thioester, which may be prone to spontaneous hydrolysis to yield 2-hydroxydec-4-enoic acid due to increased electrophilicity of the carbonyl. 2-hydroxydec-4-enoic acid can then be further oxidized by poxM to yield the alpha-ketoacid 2-oxodec-4-enoicacid, which is reductively aminated by the aminotransferase poxL to yield (S,E)-2-aminodec-4-enoic acid. The Hybrid PKS-NRPS synthetase poxE then performs condensation between the octaketide product of its PKS modules and the amino group of (S,E)-2-aminodec-4-enoic acid which is activated and incorporated by the adenylation domain. The resulting aminoacyl product can be cyclized by the Diels-Alderase PoxQ and reductively released by the reductive (R) domain of poxE to yield an aldehyde intermediate. The released aldehyde is then substrate for a Knoevenagel condensation by the hydrolyase poxO followed by an oxidation at the 5-position of the pyrrolidone ring. The presence of the olefin from the amino acid building block allows for migration of the substituted allyl group to occur. This allylic transposition reaction takes place in a conjugate addition, semipinacol-like fashion to yield a succinimide intermediate. Iterative two-electron oxidations of the C7 methyl of the succinimide intermediate to the carboxylic acid can be catalyzed by one of two remaining cytochrome P450 monooxygenasess poxC or poxD to yield oxaleimide A. Subsequent oxidation yields the maleimide scaffold oxaleimide I. Both oxaleimide A and oxaleimide I can undergo oxidative modifications in the decalin ring to yield the series of products oxaleimides B to H. This chain is Hydrolyase poxO, found in Penicillium oxalicum.